A 514-amino-acid polypeptide reads, in one-letter code: Probable WRKY transcription factor 4 (514 aa).

3 disordered regions span residues 1-28 (MSEKEEAPSTSKSTGAPSRPTLSLPPRP), 175-204 (QPQTEYPPPSQVQSFSSGQAQIPTSAPLPA), and 278-394 (YKGQ…TVTE). 2 stretches are compositionally biased toward polar residues: residues 185-198 (QVQSFSSGQAQIPT) and 286-299 (PPQNTKRGNKDNTA). Residues 223–287 (NVDKPADDGY…YKGQHNHEPP (65 aa)) constitute a DNA-binding region (WRKY 1). A compositionally biased stretch (low complexity) spans 300–313 (NINGSSINNNRGSS). Positions 315–326 (LGASQFQTNSSN) are enriched in polar residues. Residues 359–380 (TDVREKDENEPDPKRRSTEVRI) show a composition bias toward basic and acidic residues. The WRKY 2 DNA-binding region spans 403-468 (SEVDLLDDGY…YEGKHNHDLP (66 aa)). Positions 434, 436, 439, 463, and 465 each coordinate Zn(2+). Residues 464–514 (NHDLPAAKSSSHAAAAAQLRPDNRPGGLANLNQQQQQQPVARLRLKEEQTT) are disordered. Residues 469-480 (AAKSSSHAAAAA) are compositionally biased toward low complexity.

As to expression, in young, mature and senescent leaves.

It localises to the nucleus. In terms of biological role, transcription factor that binds specifically to the W box (5'-(T)TGAC[CT]-3'), a frequently occurring elicitor-responsive cis-acting element. Has a positive role in resistance to necrotrophic pathogens (e.g. Botrytis cinerea), but a negative effect on plant resistance to biotrophic pathogens (e.g. Pseudomonas syringae). The protein is Probable WRKY transcription factor 4 (WRKY4) of Arabidopsis thaliana (Mouse-ear cress).